Here is a 142-residue protein sequence, read N- to C-terminus: Calmodulin-alpha (142 aa).

Alanine 2 is modified (N-acetylalanine). EF-hand domains follow at residues 8–43, 44–79, 81–116, and 117–142; these read EQIA…LGQN, PTEA…KMKD, DSEE…LGEK, and LTDE…YEEF. Residues aspartate 21, aspartate 23, aspartate 25, threonine 27, glutamate 32, aspartate 57, aspartate 59, asparagine 61, threonine 63, glutamate 68, aspartate 94, aspartate 96, asparagine 98, tyrosine 100, and glutamate 105 each coordinate Ca(2+). Lysine 116 carries the N6,N6,N6-trimethyllysine modification. Ca(2+)-binding residues include aspartate 130, aspartate 132, aspartate 134, glutamine 136, and glutamate 141.

The protein belongs to the calmodulin family.

Functionally, calmodulin mediates the control of a large number of enzymes, ion channels and other proteins by Ca(2+). Among the enzymes to be stimulated by the calmodulin-Ca(2+) complex are a number of protein kinases and phosphatases. The sequence is that of Calmodulin-alpha from Arbacia punctulata (Punctuate sea urchin).